The chain runs to 292 residues: 4-diphosphocytidyl-2-C-methyl-D-erythritol kinase (292 aa).

The active site involves lysine 20. 103–113 (PMGGGIGGGSS) provides a ligand contact to ATP. The active site involves aspartate 145.

The protein belongs to the GHMP kinase family. IspE subfamily.

It catalyses the reaction 4-CDP-2-C-methyl-D-erythritol + ATP = 4-CDP-2-C-methyl-D-erythritol 2-phosphate + ADP + H(+). It functions in the pathway isoprenoid biosynthesis; isopentenyl diphosphate biosynthesis via DXP pathway; isopentenyl diphosphate from 1-deoxy-D-xylulose 5-phosphate: step 3/6. In terms of biological role, catalyzes the phosphorylation of the position 2 hydroxy group of 4-diphosphocytidyl-2C-methyl-D-erythritol. This chain is 4-diphosphocytidyl-2-C-methyl-D-erythritol kinase, found in Cupriavidus necator (strain ATCC 17699 / DSM 428 / KCTC 22496 / NCIMB 10442 / H16 / Stanier 337) (Ralstonia eutropha).